We begin with the raw amino-acid sequence, 378 residues long: Acetylornithine deacetylase (378 aa).

His76 is a Zn(2+) binding site. Asp78 is an active-site residue. Asp108 lines the Zn(2+) pocket. Glu140 is an active-site residue. Zn(2+) is bound by residues Glu141, Glu165, and His351.

This sequence belongs to the peptidase M20A family. ArgE subfamily. Homodimer. Zn(2+) is required as a cofactor. Co(2+) serves as cofactor. The cofactor is glutathione.

The protein localises to the cytoplasm. The enzyme catalyses N(2)-acetyl-L-ornithine + H2O = L-ornithine + acetate. It participates in amino-acid biosynthesis; L-arginine biosynthesis; L-ornithine from N(2)-acetyl-L-ornithine (linear): step 1/1. Its function is as follows. Catalyzes the hydrolysis of the amide bond of N(2)-acetylated L-amino acids. Cleaves the acetyl group from N-acetyl-L-ornithine to form L-ornithine, an intermediate in L-arginine biosynthesis pathway, and a branchpoint in the synthesis of polyamines. The sequence is that of Acetylornithine deacetylase from Vibrio campbellii (strain ATCC BAA-1116).